The primary structure comprises 223 residues: Protein-L-isoaspartate O-methyltransferase (223 aa).

Residue Ser70 is part of the active site.

This sequence belongs to the methyltransferase superfamily. L-isoaspartyl/D-aspartyl protein methyltransferase family.

It localises to the cytoplasm. It carries out the reaction [protein]-L-isoaspartate + S-adenosyl-L-methionine = [protein]-L-isoaspartate alpha-methyl ester + S-adenosyl-L-homocysteine. In terms of biological role, catalyzes the methyl esterification of L-isoaspartyl residues in peptides and proteins that result from spontaneous decomposition of normal L-aspartyl and L-asparaginyl residues. It plays a role in the repair and/or degradation of damaged proteins. This Saccharophagus degradans (strain 2-40 / ATCC 43961 / DSM 17024) protein is Protein-L-isoaspartate O-methyltransferase.